The following is a 642-amino-acid chain: MPVITLPDGSKREFAHPVSTLDVAADIGPGLAKACIAGRVNGELKDACDLIETDAELSIITAKDEEGIEILRHSCAHLLGHAIKQLWPQTKMAIGPVIDNGFYYDIDLEHKLTQDDIEALEKRMLELAKTNYDVVKRVVSWQEARDTFAARGEEYKIAILDENISKDATPALYHHEEYTDMCRGPHVPNMRFCQHFKLMSIAGAYWRGNSENKMLQRIYGTAWADKKALSTYLARLEEAAKRDHRKIGKQLDLYHMQEEAPGMVFWHNDGWSIFLELERFIRRKLNQYTYQEVKGPLMMDRVLWERSGHWDKYSEAMFTTSSENREYAIKPMNCPGHVQIFNQGLKSYRDLPLRMAEFGCCHRNEPSGSLHGLMRVRGFTQDDAHIFCTEDQVQAEVSSCIQMVYDTYSTFGFENIVVKLSTRPEKRIGDDAMWDRAEEALKQALRANNIEFTILPGEGAFYGPKIEFTLHDCLDRAWQCGTVQLDYALPSRLGATYVAEDNSRQTPVMIHRAILGSLERFLGILIEEYAGRFPTWLAPMQVVVMNITDKQADYVEEVVKFFKEQGIRASFDLRNEKIGFKIREHTLRRVPYLLVVGDQEMENKEVAVRTRDGVDLGKMRIEDFAAKIHQQISLRSLKLLEE.

Positions 1–61 (MPVITLPDGS…ETDAELSIIT (61 aa)) constitute a TGS domain. A catalytic region spans residues 243-534 (DHRKIGKQLD…LIEEYAGRFP (292 aa)). The Zn(2+) site is built by Cys334, His385, and His511.

The protein belongs to the class-II aminoacyl-tRNA synthetase family. In terms of assembly, homodimer. It depends on Zn(2+) as a cofactor.

It is found in the cytoplasm. It catalyses the reaction tRNA(Thr) + L-threonine + ATP = L-threonyl-tRNA(Thr) + AMP + diphosphate + H(+). Its function is as follows. Catalyzes the attachment of threonine to tRNA(Thr) in a two-step reaction: L-threonine is first activated by ATP to form Thr-AMP and then transferred to the acceptor end of tRNA(Thr). Also edits incorrectly charged L-seryl-tRNA(Thr). The chain is Threonine--tRNA ligase from Shewanella oneidensis (strain ATCC 700550 / JCM 31522 / CIP 106686 / LMG 19005 / NCIMB 14063 / MR-1).